The chain runs to 136 residues: Large ribosomal subunit protein uL16 (136 aa).

It belongs to the universal ribosomal protein uL16 family. In terms of assembly, part of the 50S ribosomal subunit.

In terms of biological role, binds 23S rRNA and is also seen to make contacts with the A and possibly P site tRNAs. The chain is Large ribosomal subunit protein uL16 from Pseudoalteromonas atlantica (strain T6c / ATCC BAA-1087).